The primary structure comprises 232 residues: MAKKGKKYVEAAKLIERTKAYDVAEAVSLTKKANTAKFDATVEVAFRLGVDPRKNDQQIRGAVVLPNGTGKTQRVLVFAKGEKAKEAEAAGADYVGDSDYITKIQQGWFEFDVIVATPDMMGEVGKIGRVLGPKGLMPNPKTGTVTFEVEKAINEIKAGKVEYRVDKAGNIHAPIGKVSFEDEKLVENFATIYDTILKAKPAAAKGVYVKNVSVTSTMGPGVKVDPSSFSAK.

Belongs to the universal ribosomal protein uL1 family. Part of the 50S ribosomal subunit.

Binds directly to 23S rRNA. The L1 stalk is quite mobile in the ribosome, and is involved in E site tRNA release. In terms of biological role, protein L1 is also a translational repressor protein, it controls the translation of the L11 operon by binding to its mRNA. The protein is Large ribosomal subunit protein uL1 of Bacillus pumilus (strain SAFR-032).